Reading from the N-terminus, the 186-residue chain is Orotate phosphoribosyltransferase (186 aa).

5-phospho-alpha-D-ribose 1-diphosphate contacts are provided by residues arginine 96, lysine 100, histidine 102, and 121 to 129 (DDVATTGTS). Orotate-binding residues include threonine 125 and arginine 153.

It belongs to the purine/pyrimidine phosphoribosyltransferase family. PyrE subfamily. Homodimer. Requires Mg(2+) as cofactor.

It carries out the reaction orotidine 5'-phosphate + diphosphate = orotate + 5-phospho-alpha-D-ribose 1-diphosphate. The protein operates within pyrimidine metabolism; UMP biosynthesis via de novo pathway; UMP from orotate: step 1/2. Its function is as follows. Catalyzes the transfer of a ribosyl phosphate group from 5-phosphoribose 1-diphosphate to orotate, leading to the formation of orotidine monophosphate (OMP). The protein is Orotate phosphoribosyltransferase of Aeropyrum pernix (strain ATCC 700893 / DSM 11879 / JCM 9820 / NBRC 100138 / K1).